The primary structure comprises 491 residues: Ketol-acid reductoisomerase (NADP(+)) (491 aa).

The KARI N-terminal Rossmann domain maps to 15-208; it reads AQLGKCRFMA…GGHRAGVLES (194 aa). NADP(+) contacts are provided by residues 45-48, Arg-68, Arg-76, Ser-78, and 108-110; these read CGAQ and DKQ. His-132 is a catalytic residue. Gly-158 contributes to the NADP(+) binding site. KARI C-terminal knotted domains lie at 209–344 and 345–484; these read SFVA…TAPQ and YEGK…MTDM. Positions 217, 221, 389, and 393 each coordinate Mg(2+). Ser-414 is a binding site for substrate.

The protein belongs to the ketol-acid reductoisomerase family. Mg(2+) is required as a cofactor.

The catalysed reaction is (2R)-2,3-dihydroxy-3-methylbutanoate + NADP(+) = (2S)-2-acetolactate + NADPH + H(+). It catalyses the reaction (2R,3R)-2,3-dihydroxy-3-methylpentanoate + NADP(+) = (S)-2-ethyl-2-hydroxy-3-oxobutanoate + NADPH + H(+). The protein operates within amino-acid biosynthesis; L-isoleucine biosynthesis; L-isoleucine from 2-oxobutanoate: step 2/4. It participates in amino-acid biosynthesis; L-valine biosynthesis; L-valine from pyruvate: step 2/4. Functionally, involved in the biosynthesis of branched-chain amino acids (BCAA). Catalyzes an alkyl-migration followed by a ketol-acid reduction of (S)-2-acetolactate (S2AL) to yield (R)-2,3-dihydroxy-isovalerate. In the isomerase reaction, S2AL is rearranged via a Mg-dependent methyl migration to produce 3-hydroxy-3-methyl-2-ketobutyrate (HMKB). In the reductase reaction, this 2-ketoacid undergoes a metal-dependent reduction by NADPH to yield (R)-2,3-dihydroxy-isovalerate. This chain is Ketol-acid reductoisomerase (NADP(+)), found in Klebsiella pneumoniae subsp. pneumoniae (strain ATCC 700721 / MGH 78578).